The sequence spans 154 residues: Isotocin-neurophysin IT 1 (154 aa).

The N-terminal stretch at 1-20 (MSGSMFSVFSLLYLLSVCSA) is a signal peptide. C21 and C26 form a disulfide bridge. G29 carries the post-translational modification Glycine amide. 7 disulfides stabilise this stretch: C42–C86, C45–C59, C53–C76, C60–C66, C93–C105, C99–C117, and C106–C111.

This sequence belongs to the vasopressin/oxytocin family.

Functionally, isotocin causes contraction of smooth muscles. This chain is Isotocin-neurophysin IT 1, found in Catostomus commersonii (White sucker).